We begin with the raw amino-acid sequence, 249 residues long: PF03932 family protein CutC (249 aa).

Belongs to the CutC family.

Its subcellular location is the cytoplasm. The sequence is that of PF03932 family protein CutC from Bacteroides thetaiotaomicron (strain ATCC 29148 / DSM 2079 / JCM 5827 / CCUG 10774 / NCTC 10582 / VPI-5482 / E50).